The primary structure comprises 244 residues: Venom nerve growth factor 2 (244 aa).

An N-terminal signal peptide occupies residues 1 to 18; sequence MSMLCYTLIIAFLIGTWA. Residues 19–125 constitute a propeptide that is removed on maturation; the sequence is APKSEDNVPL…TLNRNIRAKR (107 aa). Over residues 47–66 the composition is skewed to basic and acidic residues; sequence GLKTSRNTDQRHPAPKKAED. The segment at 47–67 is disordered; the sequence is GLKTSRNTDQRHPAPKKAEDQ. Cystine bridges form between cysteine 139/cysteine 205, cysteine 181/cysteine 233, and cysteine 193/cysteine 235.

This sequence belongs to the NGF-beta family. Homodimer; non-covalently linked. As to expression, expressed by the venom gland.

It is found in the secreted. Functionally, nerve growth factor is important for the development and maintenance of the sympathetic and sensory nervous systems. It stimulates division and differentiation of sympathetic and embryonic sensory neurons as well as basal forebrain cholinergic neurons in the brain. Its relevance in the snake venom is not clear. However, it has been shown to inhibit metalloproteinase-dependent proteolysis of platelet glycoprotein Ib alpha, suggesting a metalloproteinase inhibition to prevent metalloprotease autodigestion and/or protection against prey proteases. Binds a lipid between the two protein chains in the homodimer. The lipid-bound form promotes histamine relase from mouse mast cells, contrary to the lipid-free form. The sequence is that of Venom nerve growth factor 2 from Tropidechis carinatus (Australian rough-scaled snake).